We begin with the raw amino-acid sequence, 200 residues long: MASKIETLKANLEAALGARVVSLTEAIGELTLVVKASDYLDVATTLRDDPKLRFEQLIDLCGVDYQTYGDGAYDGPRFAAVTHLLSVTNNWRLRLRVFAPDDDLPIVPSLVDIWNSANWYEREAFDLYGIVFEGHPDLRRILTDYGFIGHPFRKDFPVSGYVEMRYDPEEKRVVYQPVTIEPREITPRVIREDRYGGLKH.

It belongs to the complex I 30 kDa subunit family. In terms of assembly, NDH-1 is composed of 14 different subunits. Subunits NuoB, C, D, E, F, and G constitute the peripheral sector of the complex.

The protein resides in the cell inner membrane. The catalysed reaction is a quinone + NADH + 5 H(+)(in) = a quinol + NAD(+) + 4 H(+)(out). Its function is as follows. NDH-1 shuttles electrons from NADH, via FMN and iron-sulfur (Fe-S) centers, to quinones in the respiratory chain. The immediate electron acceptor for the enzyme in this species is believed to be ubiquinone. Couples the redox reaction to proton translocation (for every two electrons transferred, four hydrogen ions are translocated across the cytoplasmic membrane), and thus conserves the redox energy in a proton gradient. In Burkholderia multivorans (strain ATCC 17616 / 249), this protein is NADH-quinone oxidoreductase subunit C.